Reading from the N-terminus, the 217-residue chain is Magnetosome protein MamA (217 aa).

6 TPR repeats span residues 12–44 (VTLY…NDDI), 46–79 (QVYY…DAFD), 80–113 (VDVA…APDN), 114–147 (VKVA…NPIN), 148–181 (FNVR…RPNE), and 182–215 (GKVH…DEGA). The segment at 41–112 (NDDIRQVYYR…LERSLADAPD (72 aa)) is N-terminal domain (NTD). The C-terminal domain (CTD) stretch occupies residues 113–217 (NVKVATVLGL…ANELDEGASV (105 aa)).

The protein belongs to the magnetosome MamA family. Oligomerizes into high molecular weight complexes (at least 560 kDa). Forms round, 20 nm diameter complexes with a central cavity. Interacts with full-length Mms6. Probably binds MamC.

It localises to the magnetosome membrane. Its function is as follows. Probably forms a large homooligomer on which other magnetosome subunits assemble. Required for formation of functional magnetosomes from pre-existing vesicles, it has a dynamic location in the cell. This Paramagnetospirillum magneticum (strain ATCC 700264 / AMB-1) (Magnetospirillum magneticum) protein is Magnetosome protein MamA.